Reading from the N-terminus, the 1482-residue chain is Cystic fibrosis transmembrane conductance regulator (1482 aa).

Topologically, residues 1–77 (MQRSPLEKAN…KLINALRRCF (77 aa)) are cytoplasmic. The helical transmembrane segment at 78–98 (FWRFVFHGIILYLGEVTKAVQ) threads the bilayer. An ABC transmembrane type-1 1 domain is found at 81-365 (FVFHGIILYL…WAVQTWYDSL (285 aa)). Residues 99-122 (PLLLGRIIASYDPDNKVERSIAIY) are Extracellular-facing. Residues 123 to 146 (LGIGLCLLFIVRTLLLHPAIFGLH) traverse the membrane as a helical segment. The Cytoplasmic portion of the chain corresponds to 147–195 (HMGMQMRIALFSLIYKKTLKLSSRVLDKISTGQLISLLSNNLNKFDEGL). The helical transmembrane segment at 196 to 216 (ALAHFVWIVPLQVVLLMGLLW) threads the bilayer. The Extracellular portion of the chain corresponds to 217–222 (DLLQAS). Residues 223–243 (AFCGLAFLIVLALFQAWLGQM) form a helical membrane-spanning segment. Topologically, residues 244-298 (MMKYRERRAGKINERLVITSEMIDNIQSVKAYCWEEAMEKMIENLRETELKLTRK) are cytoplasmic. A helical transmembrane segment spans residues 299–319 (TAYVRYFNSSAFFFSGFFVVF). The Extracellular segment spans residues 320–339 (LAVLPYALIKGIILRKIFTT). The chain crosses the membrane as a helical span at residues 340–358 (ISFCIVLRMAVTRQFPWAV). Topologically, residues 359 to 859 (QTWYDSLGAI…YLRYITIHKN (501 aa)) are cytoplasmic. ATP-binding positions include tryptophan 401, serine 434, 458–465 (GSTGAGKT), and glutamine 493. An ABC transporter 1 domain is found at 423-646 (NGDNGLFFSN…RPDFSSKLMG (224 aa)). The S-palmitoyl cysteine moiety is linked to residue cysteine 524. A phosphoserine mark is found at serine 549 and serine 660. The interval 654–832 (SAERRSSILT…DEINEEDLKE (179 aa)) is disordered R region. Serine 670 carries the phosphoserine; by PKA modification. Serine 686 is subject to Phosphoserine. Lysine 688 participates in a covalent cross-link: Glycyl lysine isopeptide (Lys-Gly) (interchain with G-Cter in ubiquitin). A phosphoserine mark is found at serine 700, serine 712, serine 737, serine 769, serine 796, and serine 814. A helical transmembrane segment spans residues 860–880 (LVFVLIWCLVIFLVEVAASLV). An ABC transmembrane type-1 2 domain is found at 860 to 1156 (LVFVLIWCLV…AVNSSIDVDS (297 aa)). At 881 to 919 (GLWLLEDISFKDKTNGTNGANNTFPVIITDTSKYYLFYI) the chain is on the extracellular side. Asparagine 895 and asparagine 901 each carry an N-linked (GlcNAc...) asparagine glycan. The chain crosses the membrane as a discontinuously helical span at residues 920–940 (YVGIADTFFALGIFRGLPLVH). Residues 941 to 991 (TLISVSKILHHKMLYSVLKAPMSTFNTLKPGGILNRFSKDIAILDDLLPLT) are Cytoplasmic-facing. Residues 992–1012 (IFDFIQLILIVVGALIVVSAI) traverse the membrane as a helical segment. Residues 1013–1014 (RP) are Extracellular-facing. A helical transmembrane segment spans residues 1015-1035 (YIFLATVPVIIAFIMLRAYFL). Residues 1036 to 1096 (QTSQQLKQLE…TASWFLYLST (61 aa)) lie on the Cytoplasmic side of the membrane. The helical transmembrane segment at 1097 to 1117 (LRWFQMRIELVFVIFFIAVTF) threads the bilayer. Topologically, residues 1118-1131 (ISILTTGDGEGRVG) are extracellular. A helical membrane pass occupies residues 1132–1152 (ILLTLAMNIMSTLQWAVNSSI). Topologically, residues 1153–1482 (DVDSLMRSVS…TEEEVQETRL (330 aa)) are cytoplasmic. The region spanning 1212–1445 (MIVKDLTAKY…KSLYRQAISH (234 aa)) is the ABC transporter 2 domain. Residues tyrosine 1221 and 1246 to 1253 (GRTGSGKS) each bind ATP. The tract at residues 1388 to 1482 (RVLKNAFANC…TEEEVQETRL (95 aa)) is interaction with GORASP2. Cysteine 1397 carries S-palmitoyl cysteine lipidation. Serine 1446 and serine 1458 each carry phosphoserine. A PDZ-binding motif is present at residues 1480 to 1482 (TRL).

Belongs to the ABC transporter superfamily. ABCC family. CFTR transporter (TC 3.A.1.202) subfamily. Monomer; does not require oligomerization for channel activity. May form oligomers in the membrane. Interacts with SLC26A3, SLC26A6 and NHERF1. Interacts with SHANK2. Interacts with MYO6. Interacts (via C-terminus) with GOPC (via PDZ domain); this promotes CFTR internalization and thereby decreases channel activity. Interacts with SLC4A7 through NHERF1. Found in a complex with MYO5B and RAB11A. Interacts with ANO1. Interacts with SLC26A8. Interacts with AHCYL1; the interaction increases CFTR activity. Interacts with CSE1L. The core-glycosylated form interacts with GORASP2 (via PDZ GRASP-type 1 domain) in respone to ER stress. Interacts with MARCHF2; the interaction leads to CFTR ubiqtuitination and degradation. Interacts with ADGRG2. In terms of processing, N-glycosylated. Phosphorylated; cAMP treatment promotes phosphorylation and activates the channel. Dephosphorylation decreases the ATPase activity (in vitro). Phosphorylation at PKA sites activates the channel. Phosphorylation at PKC sites enhances the response to phosphorylation by PKA. Phosphorylated by AMPK; this inhibits channel activity. Post-translationally, ubiquitinated, leading to its degradation in the lysosome. Deubiquitination by USP10 in early endosomes enhances its endocytic recycling to the cell membrane. Ubiquitinated by RNF185 during ER stress. Ubiquitinated by MARCHF2.

The protein resides in the apical cell membrane. The protein localises to the early endosome membrane. It localises to the cell membrane. It is found in the recycling endosome membrane. Its subcellular location is the endoplasmic reticulum membrane. The protein resides in the nucleus. It carries out the reaction ATP + H2O + closed Cl(-) channel = ADP + phosphate + open Cl(-) channel.. It catalyses the reaction chloride(in) = chloride(out). The catalysed reaction is hydrogencarbonate(in) = hydrogencarbonate(out). The enzyme catalyses ATP + H2O = ADP + phosphate + H(+). In terms of biological role, epithelial ion channel that plays an important role in the regulation of epithelial ion and water transport and fluid homeostasis. Mediates the transport of chloride ions across the cell membrane. Possesses an intrinsic ATPase activity and utilizes ATP to gate its channel; the passive flow of anions through the channel is gated by cycles of ATP binding and hydrolysis by the ATP-binding domains. The ion channel is also permeable to HCO(3)(-); selectivity depends on the extracellular chloride concentration. Exerts its function also by modulating the activity of other ion channels and transporters. Contributes to the regulation of the pH and the ion content of the epithelial fluid layer. Modulates the activity of the epithelial sodium channel (ENaC) complex, in part by regulating the cell surface expression of the ENaC complex. May regulate bicarbonate secretion and salvage in epithelial cells by regulating the transporter SLC4A7. Can inhibit the chloride channel activity of ANO1. Plays a role in the chloride and bicarbonate homeostasis during sperm epididymal maturation and capacitation. This is Cystic fibrosis transmembrane conductance regulator from Didelphis virginiana (North American opossum).